The following is a 252-amino-acid chain: Flavin-dependent thymidylate synthase (252 aa).

Residues 7-235 enclose the ThyX domain; sequence LDVQLVACST…PTVFSDFETS (229 aa). DUMP contacts are provided by residues 94-97, 105-109, and Arg-174; these read ELVR and QLSQR. FAD contacts are provided by residues 97–99 and Gln-105; that span reads RHR. A ThyX motif motif is present at residues 97-107; the sequence is RHRHFSFSQLS. Residues 190 to 192 and His-196 contribute to the FAD site; that span reads NFR. Residue Arg-201 coordinates dUMP. The active-site Involved in ionization of N3 of dUMP, leading to its activation is Arg-201.

The protein belongs to the thymidylate synthase ThyX family. As to quaternary structure, homotetramer. FAD serves as cofactor.

It catalyses the reaction dUMP + (6R)-5,10-methylene-5,6,7,8-tetrahydrofolate + NADPH + H(+) = dTMP + (6S)-5,6,7,8-tetrahydrofolate + NADP(+). It functions in the pathway pyrimidine metabolism; dTTP biosynthesis. Functionally, catalyzes the reductive methylation of 2'-deoxyuridine-5'-monophosphate (dUMP) to 2'-deoxythymidine-5'-monophosphate (dTMP) while utilizing 5,10-methylenetetrahydrofolate (mTHF) as the methyl donor, and NADPH and FADH(2) as the reductant. This Corynebacterium diphtheriae (strain ATCC 700971 / NCTC 13129 / Biotype gravis) protein is Flavin-dependent thymidylate synthase.